We begin with the raw amino-acid sequence, 858 residues long: Ubiquitin carboxyl-terminal hydrolase 5 (858 aa).

Ala-2 carries the post-translational modification N-acetylalanine. The segment at 74–96 (RRTRRPKEEDPTTGTGDPPRKKP) is disordered. A Glycyl lysine isopeptide (Lys-Gly) (interchain with G-Cter in SUMO) cross-link involves residue Lys-113. A phosphoserine mark is found at Ser-149 and Ser-156. Residues 175–283 (QVSKHAFSLK…EHLSHFGIDM (109 aa)) form a UBP-type; degenerate zinc finger. An intrachain disulfide couples Cys-195 to Cys-816. Positions 199 and 202 each coordinate Zn(2+). Residue Trp-209 coordinates substrate. Residue Cys-219 coordinates Zn(2+). Position 221–224 (221–224 (RRYF)) interacts with substrate. His-232 contacts Zn(2+). Residues Tyr-259, Tyr-261, and Asp-264 each coordinate substrate. Thr-292 carries the phosphothreonine modification. The USP domain maps to 326-856 (TGIRNLGNSC…LGYIYFYQRV (531 aa)). The Nucleophile role is filled by Cys-335. At Thr-623 the chain carries Phosphothreonine. UBA domains follow at residues 654–695 (MLDE…VMSH) and 722–762 (PPPE…IFSH). Phosphoserine occurs at positions 779, 783, and 785. The active-site Proton acceptor is His-818.

The protein belongs to the peptidase C19 family. In terms of assembly, homodimer. Interacts with TRIML1. Ubiquitinated by SMURF1; leading to proteasomal degradation. In terms of processing, SUMOylated at Lys-113; SUMOylation affects the interaction with Cav3.2 channels.

The protein localises to the cytoplasm. Its subcellular location is the stress granule. It is found in the nucleus. The catalysed reaction is Thiol-dependent hydrolysis of ester, thioester, amide, peptide and isopeptide bonds formed by the C-terminal Gly of ubiquitin (a 76-residue protein attached to proteins as an intracellular targeting signal).. Functionally, deubiquitinating enzyme that participates in a wide range of cellular processes by specifically cleaving isopeptide bonds between ubiquitin and substrate proteins or ubiquitin itself. Affects thereby important cellular signaling pathways such as NF-kappa-B, Wnt/beta-catenin, and cytokine production by regulating ubiquitin-dependent protein degradation. Participates in the activation of the Wnt signaling pathway by promoting FOXM1 deubiquitination and stabilization that induces the recruitment of beta-catenin to Wnt target gene promoter. Regulates the assembly and disassembly of heat-induced stress granules by mediating the hydrolysis of unanchored ubiquitin chains. Promotes lipopolysaccharide-induced apoptosis and inflammatory response by stabilizing the TXNIP protein. Affects T-cell biology by stabilizing the inhibitory receptor on T-cells PDC1. Acts as a negative regulator of autophagy by regulating ULK1 at both protein and mRNA levels. Acts also as a negative regulator of type I interferon production by simultaneously removing both 'Lys-48'-linked unanchored and 'Lys-63'-linked anchored polyubiquitin chains on the transcription factor IRF3. Modulates the stability of DNA mismatch repair protein MLH1 and counteracts the effect of the ubiquitin ligase UBR4. Upon activation by insulin, it gets phosphorylated through mTORC1-mediated phosphorylation to enhance YTHDF1 stability by removing 'Lys-11'-linked polyubiquitination. May also deubiquitinate other substrates such as the calcium channel CACNA1H. The sequence is that of Ubiquitin carboxyl-terminal hydrolase 5 (UBP5) from Pongo abelii (Sumatran orangutan).